A 63-amino-acid chain; its full sequence is Short neurotoxin 2 (63 aa).

4 disulfides stabilise this stretch: C3–C21, C15–C39, C43–C49, and C50–C55.

It belongs to the three-finger toxin family. Short-chain subfamily. Orphan group XVIII sub-subfamily. Expressed by the venom gland.

The protein resides in the secreted. Functionally, blocks both the muscle-twitch response to nerve stimulation and the response to exogenous acetylcholine. This chain is Short neurotoxin 2, found in Bungarus fasciatus (Banded krait).